A 340-amino-acid chain; its full sequence is MLASDSKLIRIRNFEACLGVVLEIKEPVGFKRRYLNFIEEIKSAYQISSPRNVFKSYELKRKLGLQDFEDVAQNFVNIVIADSCRIHIVFASFNTKKVEKVIYYRKDRRKRQQEKKTIEFLRHLSSYFPYVAAWSAIFNDEAISFDNIEIHLDSFDGEVTYAWEILKNNISAKIKTFPKGDQCNPFISASDIVLSLVEINLLKGDFRLDVQELKKLLEKYNIKGSITHCGTNKIKYITPISSQKIPEALDYAEPVIYVVPGQIKKEWIENSPKFEYVLKYAQFVEGGVKFLNIDRDYEFIRDTDVLAYFDDAGKVLAKNISSLYDVECKSISEIINETKY.

This is an uncharacterized protein from Archaeoglobus fulgidus (strain ATCC 49558 / DSM 4304 / JCM 9628 / NBRC 100126 / VC-16).